The primary structure comprises 403 residues: Phosphopentomutase (403 aa).

The Mn(2+) site is built by Asp-13, Asp-298, His-303, Asp-339, His-340, and His-351.

The protein belongs to the phosphopentomutase family. Mn(2+) is required as a cofactor.

It is found in the cytoplasm. The catalysed reaction is 2-deoxy-alpha-D-ribose 1-phosphate = 2-deoxy-D-ribose 5-phosphate. The enzyme catalyses alpha-D-ribose 1-phosphate = D-ribose 5-phosphate. It participates in carbohydrate degradation; 2-deoxy-D-ribose 1-phosphate degradation; D-glyceraldehyde 3-phosphate and acetaldehyde from 2-deoxy-alpha-D-ribose 1-phosphate: step 1/2. In terms of biological role, isomerase that catalyzes the conversion of deoxy-ribose 1-phosphate (dRib-1-P) and ribose 1-phosphate (Rib-1-P) to deoxy-ribose 5-phosphate (dRib-5-P) and ribose 5-phosphate (Rib-5-P), respectively. In Streptococcus thermophilus (strain CNRZ 1066), this protein is Phosphopentomutase.